We begin with the raw amino-acid sequence, 158 residues long: Rhombotin-2 (158 aa).

2 consecutive LIM zinc-binding domains span residues 30-89 (CGGC…RLFG) and 94-153 (CASC…EWTK).

Interacts with BEX2 and KDM5A. Interacts via its LIM domains with ELF2 and LDB1. Also interacts with basic helix-loop-helix protein TAL1/SCL and can assemble in a complex with LMO2 and TAL1/SCL. Expressed in early mouse development in central nervous system, lung, kidney, liver and spleen but only very low levels occur in thymus.

The protein resides in the nucleus. Functionally, acts with TAL1/SCL to regulate red blood cell development. Also acts with LDB1 to maintain erythroid precursors in an immature state. The polypeptide is Rhombotin-2 (Lmo2) (Mus musculus (Mouse)).